The sequence spans 785 residues: Phenylalanine--tRNA ligase beta subunit (785 aa).

Residues 39–147 (FPIPRGVVFA…DALPPGTPLA (109 aa)) form the tRNA-binding domain. Residues 399–474 (KPPEAIPFRP…RIQGYETIPL (76 aa)) enclose the B5 domain. Positions 452, 458, 461, and 462 each coordinate Mg(2+). The FDX-ACB domain maps to 688–780 (SRHPAAFRDL…ALRARGFGLR (93 aa)).

This sequence belongs to the phenylalanyl-tRNA synthetase beta subunit family. Type 1 subfamily. As to quaternary structure, tetramer of two alpha and two beta subunits. It depends on Mg(2+) as a cofactor.

It is found in the cytoplasm. It carries out the reaction tRNA(Phe) + L-phenylalanine + ATP = L-phenylalanyl-tRNA(Phe) + AMP + diphosphate + H(+). The polypeptide is Phenylalanine--tRNA ligase beta subunit (Thermus thermophilus (strain ATCC BAA-163 / DSM 7039 / HB27)).